A 172-amino-acid polypeptide reads, in one-letter code: Early nodulin-like protein 17 (172 aa).

A signal peptide spans 1 to 26; it reads MARFTVLITAVVLAFLMAAPMPGVTA. Positions 27–127 constitute a Phytocyanin domain; the sequence is KKYTVGENKF…GMKLSVKVEK (101 aa). N42, N73, N88, and N101 each carry an N-linked (GlcNAc...) asparagine glycan. Residues C80 and C115 are joined by a disulfide bond. The GPI-anchor amidated glycine moiety is linked to residue G141. Positions 142–172 are cleaved as a propeptide — removed in mature form; sequence SVSMVTGLAQFMIPVSLFAFPAMWDVISRMW.

Belongs to the early nodulin-like (ENODL) family.

Its subcellular location is the cell membrane. May act as a carbohydrate transporter. This chain is Early nodulin-like protein 17, found in Arabidopsis thaliana (Mouse-ear cress).